The sequence spans 665 residues: Kinesin-like protein KIF22 (665 aa).

The Kinesin motor domain maps to 43–368 (RVRVAVRLRP…LNFAARSKEV (326 aa)). 127 to 134 (GPTGAGKT) is an ATP binding site. The segment at 379–428 (QPHALGPVKLSQKELLGPPEAKRARGPEEEEIGSPEPMAAPASASQKLSP) is disordered. Ser412, Ser427, and Ser452 each carry phosphoserine. Positions 412-428 (SPEPMAAPASASQKLSP) are enriched in low complexity. Lys465 is covalently cross-linked (Glycyl lysine isopeptide (Lys-Gly) (interchain with G-Cter in SUMO2)). A coiled-coil region spans residues 465–508 (KRERMVLMKTVEEKDLEIERLKTKQKELEAKMLAQKAEEKENHC). Ser543, Ser562, and Ser581 each carry phosphoserine.

Belongs to the TRAFAC class myosin-kinesin ATPase superfamily. Kinesin family. As to quaternary structure, interacts with FAM83D. Interacts with SIAH1. Post-translationally, ubiquitinated; mediated by SIAH1 and leading to its subsequent proteasomal degradation. As to expression, expressed in bone, cartilage, joint capsule, ligament, skin, and primary cultured chondrocytes.

The protein localises to the nucleus. Its subcellular location is the cytoplasm. It is found in the cytoskeleton. Functionally, kinesin family member that is involved in spindle formation and the movements of chromosomes during mitosis and meiosis. Binds to microtubules and to DNA. Plays a role in congression of laterally attached chromosomes in NDC80-depleted cells. The sequence is that of Kinesin-like protein KIF22 (KIF22) from Homo sapiens (Human).